The sequence spans 361 residues: 24-methylenesterol C-methyltransferase 2 (361 aa).

It belongs to the class I-like SAM-binding methyltransferase superfamily. Erg6/SMT family.

The enzyme catalyses 24-methylidenelophenol + S-adenosyl-L-methionine = (Z)-24-ethylidenelophenol + S-adenosyl-L-homocysteine + H(+). It functions in the pathway steroid biosynthesis; sterol biosynthesis. In terms of biological role, catalyzes the methyl transfer from S-adenosyl-methionine to the methylene group of 24-methylene lophenol to form 24-ethylidene lophenol. The chain is 24-methylenesterol C-methyltransferase 2 (SMT2) from Arabidopsis thaliana (Mouse-ear cress).